A 615-amino-acid chain; its full sequence is DNA mismatch repair protein MutL (615 aa).

The disordered stretch occupies residues Arg-369–Tyr-397. The segment covering Pro-378–Pro-391 has biased composition (low complexity).

The protein belongs to the DNA mismatch repair MutL/HexB family.

In terms of biological role, this protein is involved in the repair of mismatches in DNA. It is required for dam-dependent methyl-directed DNA mismatch repair. May act as a 'molecular matchmaker', a protein that promotes the formation of a stable complex between two or more DNA-binding proteins in an ATP-dependent manner without itself being part of a final effector complex. The chain is DNA mismatch repair protein MutL from Escherichia coli (strain SMS-3-5 / SECEC).